Consider the following 306-residue polypeptide: 4-diphosphocytidyl-2-C-methyl-D-erythritol kinase (306 aa).

Lys11 is a catalytic residue. An ATP-binding site is contributed by 113 to 123 (PPEGGIGGGSS). Residue Asp153 is part of the active site.

The protein belongs to the GHMP kinase family. IspE subfamily.

It catalyses the reaction 4-CDP-2-C-methyl-D-erythritol + ATP = 4-CDP-2-C-methyl-D-erythritol 2-phosphate + ADP + H(+). It functions in the pathway isoprenoid biosynthesis; isopentenyl diphosphate biosynthesis via DXP pathway; isopentenyl diphosphate from 1-deoxy-D-xylulose 5-phosphate: step 3/6. Its function is as follows. Catalyzes the phosphorylation of the position 2 hydroxy group of 4-diphosphocytidyl-2C-methyl-D-erythritol. The protein is 4-diphosphocytidyl-2-C-methyl-D-erythritol kinase of Leptospira biflexa serovar Patoc (strain Patoc 1 / ATCC 23582 / Paris).